We begin with the raw amino-acid sequence, 417 residues long: Gamma-glutamyl phosphate reductase (417 aa).

This sequence belongs to the gamma-glutamyl phosphate reductase family.

The protein resides in the cytoplasm. The enzyme catalyses L-glutamate 5-semialdehyde + phosphate + NADP(+) = L-glutamyl 5-phosphate + NADPH + H(+). It participates in amino-acid biosynthesis; L-proline biosynthesis; L-glutamate 5-semialdehyde from L-glutamate: step 2/2. Its function is as follows. Catalyzes the NADPH-dependent reduction of L-glutamate 5-phosphate into L-glutamate 5-semialdehyde and phosphate. The product spontaneously undergoes cyclization to form 1-pyrroline-5-carboxylate. In Pectobacterium carotovorum subsp. carotovorum (strain PC1), this protein is Gamma-glutamyl phosphate reductase.